Here is a 317-residue protein sequence, read N- to C-terminus: MAGLAGPAKPSLALNPQEDSQFEKALTQIQGRTKKPQQKKKEKLNRGVVYLGHLPSTLSESHIYNYCAQFGDISRFRLSRSKRTGNSKGYAFVEFESEDVAKIVAETMDNYLFGERLLSCKFMPRKKVHKDLFSQRNALFHRPSFPAVKRYNRKRGHLQMLKMEYRFKKKEKLLRKKLAAKGIDYSFPSLVLPKPKNIAVAHRDSEGNQVLPDQKEGLSGEPRRKEKMMKEDISNNIPKKRKRSRRKKSSVDSQGPTPVCTPTFLERRKSQVMEVGGDKDDEIILKLPVPPVKEDTQKTPTSASPGGKRPRKRKSKQ.

Ala2 carries the post-translational modification N-acetylalanine. A Glycyl lysine isopeptide (Lys-Gly) (interchain with G-Cter in SUMO2) cross-link involves residue Lys40. One can recognise an RRM domain in the interval Gly47–Arg125. Arg116 is modified (omega-N-methylarginine). Residues Lys181 and Lys194 each participate in a glycyl lysine isopeptide (Lys-Gly) (interchain with G-Cter in SUMO2) cross-link. Arg203 carries the citrulline modification. The segment at Arg203–Gln317 is disordered. Residues Asp213–Ile233 show a composition bias toward basic and acidic residues. The residue at position 219 (Ser219) is a Phosphoserine. A compositionally biased stretch (basic residues) spans Pro238 to Lys248. Ser253 carries the phosphoserine modification. Residues Thr257 and Thr261 each carry the phosphothreonine modification. The segment covering Leu265–Ile284 has biased composition (basic and acidic residues). 2 positions are modified to omega-N-methylated arginine: Arg267 and Arg268. The residue at position 270 (Ser270) is a Phosphoserine. Residue Lys293 forms a Glycyl lysine isopeptide (Lys-Gly) (interchain with G-Cter in SUMO1); alternate linkage. Lys293 is covalently cross-linked (Glycyl lysine isopeptide (Lys-Gly) (interchain with G-Cter in SUMO2); alternate). Thr301 carries the post-translational modification Phosphothreonine. The span at Lys308–Gln317 shows a compositional bias: basic residues.

Binds to the FHA domain of MKI67; this interaction is enhanced in mitosis. Phosphorylated. In terms of processing, citrullinated by PADI4. In terms of tissue distribution, expressed in brain, heart, hind limb muscles, intestine, liver, skin and spleen.

It localises to the nucleus. The protein localises to the nucleolus. Its subcellular location is the chromosome. This Mus musculus (Mouse) protein is MKI67 FHA domain-interacting nucleolar phosphoprotein (Nifk).